Consider the following 249-residue polypeptide: LexA repressor (249 aa).

Positions Met1–Val26 are disordered. The segment covering Arg9–Pro18 has biased composition (polar residues). The H-T-H motif DNA-binding region spans Met48–Ser68. Catalysis depends on for autocatalytic cleavage activity residues Ser173 and Lys210.

The protein belongs to the peptidase S24 family. In terms of assembly, homodimer.

The enzyme catalyses Hydrolysis of Ala-|-Gly bond in repressor LexA.. In terms of biological role, represses a number of genes involved in the response to DNA damage (SOS response), including recA and lexA. In the presence of single-stranded DNA, RecA interacts with LexA causing an autocatalytic cleavage which disrupts the DNA-binding part of LexA, leading to derepression of the SOS regulon and eventually DNA repair. The protein is LexA repressor of Arthrobacter sp. (strain FB24).